The sequence spans 81 residues: Photosystem I iron-sulfur center (81 aa).

2 4Fe-4S ferredoxin-type domains span residues 2-31 (SHAVKIYDTCIGCTQCVRACPLDVLEMVPW) and 39-68 (IAASPRTEDCVGCKRCETACPTDFLSIRVY). Cysteine 11, cysteine 14, cysteine 17, cysteine 21, cysteine 48, cysteine 51, cysteine 54, and cysteine 58 together coordinate [4Fe-4S] cluster.

In terms of assembly, the cyanobacterial PSI reaction center is composed of one copy each of PsaA,B,C,D,E,F,I,J,K,L,M and X, and forms trimeric complexes. [4Fe-4S] cluster is required as a cofactor.

Its subcellular location is the cellular thylakoid membrane. The enzyme catalyses reduced [plastocyanin] + hnu + oxidized [2Fe-2S]-[ferredoxin] = oxidized [plastocyanin] + reduced [2Fe-2S]-[ferredoxin]. Apoprotein for the two 4Fe-4S centers FA and FB of photosystem I (PSI); essential for photochemical activity. FB is the terminal electron acceptor of PSI, donating electrons to ferredoxin. The C-terminus interacts with PsaA/B/D and helps assemble the protein into the PSI complex. Required for binding of PsaD and PsaE to PSI. PSI is a plastocyanin/cytochrome c6-ferredoxin oxidoreductase, converting photonic excitation into a charge separation, which transfers an electron from the donor P700 chlorophyll pair to the spectroscopically characterized acceptors A0, A1, FX, FA and FB in turn. The protein is Photosystem I iron-sulfur center of Prochlorococcus marinus (strain MIT 9303).